Consider the following 38-residue polypeptide: Defensin D7 (38 aa).

Belongs to the DEFL family. Group IV subfamily. Distributed in the epidermal cell layer of leaves and in the subepidermal layer region of stems. Not in roots.

The protein localises to the secreted. Its subcellular location is the cell wall. Functionally, antimicrobial peptide. Active against Fusarium spp., Gram-positive and Gram-negative bacterial pathogens. This Spinacia oleracea (Spinach) protein is Defensin D7.